The chain runs to 243 residues: Carboxy-S-adenosyl-L-methionine synthase (243 aa).

Residues Tyr-40, 65-67 (GCS), 90-91 (DN), 118-119 (DI), Asn-133, and Arg-200 contribute to the S-adenosyl-L-methionine site.

This sequence belongs to the class I-like SAM-binding methyltransferase superfamily. Cx-SAM synthase family. In terms of assembly, homodimer.

It carries out the reaction prephenate + S-adenosyl-L-methionine = carboxy-S-adenosyl-L-methionine + 3-phenylpyruvate + H2O. Catalyzes the conversion of S-adenosyl-L-methionine (SAM) to carboxy-S-adenosyl-L-methionine (Cx-SAM). The chain is Carboxy-S-adenosyl-L-methionine synthase from Shewanella woodyi (strain ATCC 51908 / MS32).